The following is a 60-amino-acid chain: Phycobilisome degradation protein NblA homolog 2 (60 aa).

To Synechococcus PCC 7942 NblA and some, to chloroplast ycf18.

This is Phycobilisome degradation protein NblA homolog 2 from Synechocystis sp. (strain ATCC 27184 / PCC 6803 / Kazusa).